Reading from the N-terminus, the 89-residue chain is Small ribosomal subunit protein uS19 (89 aa).

The protein belongs to the universal ribosomal protein uS19 family.

Functionally, protein S19 forms a complex with S13 that binds strongly to the 16S ribosomal RNA. The chain is Small ribosomal subunit protein uS19 from Phocaeicola vulgatus (strain ATCC 8482 / DSM 1447 / JCM 5826 / CCUG 4940 / NBRC 14291 / NCTC 11154) (Bacteroides vulgatus).